Here is a 778-residue protein sequence, read N- to C-terminus: Protection of telomeres protein 1 (778 aa).

It belongs to the telombin family. As to quaternary structure, homodimer or homooligomer. Component of the telomerase ribonucleoprotein complex. Binds single-stranded telomeric DNA as a monomer. Found in a complex with TERF1, TINF2 and TNKS1. Interacts with TNKS1.

The protein localises to the nucleus. Its subcellular location is the chromosome. The protein resides in the telomere. Component of the telomerase ribonucleoprotein (RNP) complex that is essential for the replication of chromosome termini. Is a component of the double-stranded telomeric DNA-binding TRF1 complex that is involved in the regulation of telomere length by cis-inhibition of telomerase. Also acts as a single-stranded telomeric DNA-binding protein and thus may act as a downstream effector of the TRF1 complex and may transduce information about telomere maintenance and/or length to the telomere terminus. Binds to at least two telomeric single-stranded 5'-TTAGGG-3' repeats (G-strand). Its activity is TERT dependent but it does not increase TERT activity. The polypeptide is Protection of telomeres protein 1 (POT1) (Gallus gallus (Chicken)).